The chain runs to 373 residues: Transaldolase (373 aa).

The Schiff-base intermediate with substrate role is filled by lysine 143.

It belongs to the transaldolase family. Type 2 subfamily.

The protein resides in the cytoplasm. It catalyses the reaction D-sedoheptulose 7-phosphate + D-glyceraldehyde 3-phosphate = D-erythrose 4-phosphate + beta-D-fructose 6-phosphate. It functions in the pathway carbohydrate degradation; pentose phosphate pathway; D-glyceraldehyde 3-phosphate and beta-D-fructose 6-phosphate from D-ribose 5-phosphate and D-xylulose 5-phosphate (non-oxidative stage): step 2/3. Transaldolase is important for the balance of metabolites in the pentose-phosphate pathway. The protein is Transaldolase (tal) of Mycobacterium bovis (strain ATCC BAA-935 / AF2122/97).